We begin with the raw amino-acid sequence, 613 residues long: Kelch-like protein 36 (613 aa).

Positions 45 to 112 (CDVVLVVEEQ…LYSSELELDG (68 aa)) constitute a BTB domain. The BACK domain maps to 147-249 (YLYLQELASI…PEDILLQRVK (103 aa)). Kelch repeat units lie at residues 294 to 343 (CLLF…VLGG), 344 to 395 (FIFI…SIED), 396 to 442 (MLVA…IYKD), 444 to 491 (VYIS…SLGD), 492 to 544 (SIYS…VWQG), and 545 to 593 (RIYI…VCAL).

Interacts with CUL3.

Its pathway is protein modification; protein ubiquitination. Probable substrate-specific adapter of an E3 ubiquitin-protein ligase complex which mediates the ubiquitination and subsequent proteasomal degradation of target proteins. This chain is Kelch-like protein 36 (Klhl36), found in Mus musculus (Mouse).